We begin with the raw amino-acid sequence, 429 residues long: Enolase (429 aa).

(2R)-2-phosphoglycerate is bound at residue Gln168. Glu210 serves as the catalytic Proton donor. Positions 247, 288, and 315 each coordinate Mg(2+). Positions 340, 369, 370, and 391 each coordinate (2R)-2-phosphoglycerate. Lys340 (proton acceptor) is an active-site residue.

This sequence belongs to the enolase family. The cofactor is Mg(2+).

The protein resides in the cytoplasm. It is found in the secreted. Its subcellular location is the cell surface. The catalysed reaction is (2R)-2-phosphoglycerate = phosphoenolpyruvate + H2O. It functions in the pathway carbohydrate degradation; glycolysis; pyruvate from D-glyceraldehyde 3-phosphate: step 4/5. Functionally, catalyzes the reversible conversion of 2-phosphoglycerate (2-PG) into phosphoenolpyruvate (PEP). It is essential for the degradation of carbohydrates via glycolysis. This chain is Enolase, found in Trichormus variabilis (strain ATCC 29413 / PCC 7937) (Anabaena variabilis).